Here is a 322-residue protein sequence, read N- to C-terminus: tRNA U34 carboxymethyltransferase (322 aa).

Residues Lys90, Trp104, Lys109, Gly129, 151 to 153 (DPT), 180 to 181 (IE), Met195, Tyr199, and Arg314 contribute to the carboxy-S-adenosyl-L-methionine site.

Belongs to the class I-like SAM-binding methyltransferase superfamily. CmoB family. In terms of assembly, homotetramer.

The enzyme catalyses carboxy-S-adenosyl-L-methionine + 5-hydroxyuridine(34) in tRNA = 5-carboxymethoxyuridine(34) in tRNA + S-adenosyl-L-homocysteine + H(+). In terms of biological role, catalyzes carboxymethyl transfer from carboxy-S-adenosyl-L-methionine (Cx-SAM) to 5-hydroxyuridine (ho5U) to form 5-carboxymethoxyuridine (cmo5U) at position 34 in tRNAs. This chain is tRNA U34 carboxymethyltransferase, found in Citrobacter koseri (strain ATCC BAA-895 / CDC 4225-83 / SGSC4696).